Consider the following 125-residue polypeptide: Profilin-A (125 aa).

An N-acetylserine modification is found at Ser2.

Belongs to the profilin family. In terms of assembly, occurs in many kinds of cells as a complex with monomeric actin in a 1:1 ratio.

The protein resides in the cytoplasm. It is found in the cytoskeleton. Binds to actin and affects the structure of the cytoskeleton. At high concentrations, profilin prevents the polymerization of actin, whereas it enhances it at low concentrations. By binding to PIP2, it inhibits the formation of IP3 and DG. The chain is Profilin-A (PROA) from Physarum polycephalum (Slime mold).